We begin with the raw amino-acid sequence, 649 residues long: MADVEVPINVITEINNLNELNNVNTGNEASGGISRWLIYTIIVLVVAAVVGLVIFIVKKVNNKKRESGQIIQEVSQVLTENVDKKVANDLLDVALRARTEQAQLEANSATSVQLAAVGKISQSDADMAIKSAADAKIKAEQANIEAAKAIENIRKQELDNANKAVAMATTAAAAISATYQDKSKDIIDNKLREAEETYKQVVQQRQLAEKEYNASLATRRQAERNVYNKKVTEANETIKSVKKTEDVLKVLDDKIKQAKKATDDFKKKKQADKNKPPASKPSPGPKPAPKPSPGPKPAPKPSPGPKPSPGPSACPQFQTRDSKGQCVCDPRQGVTWDGKSCVCDMKNGWNWDGKKCVKGACPQFQTRDSKGQCVCDPKQGVTWDGKGCVCDMKNGWNWDGKKCVKSGGGGGGGNVSGTITLMSNEETAVLNKGTYPGQGGKRYNRQWNVPGNMSDSCLLEFDIFFPSNFWFGCQGKIGGFFLSRPGQRGVASGCAKPGKRTGASYRVMWGGTTYKNGKRVGRDGSGVYPYLYFDDSTNSKQIPKLKQVEDCGHSIMVEEFSRSIKRNAWNNIKIGLKLNTIGQRNGLIYFEVNGQKQTQDQVMWTSSSDFNIKYVIFGTFYGGCTGQNINQIPNTFVKYKNVKISKWSP.

The helical transmembrane segment at 37-57 (LIYTIIVLVVAAVVGLVIFIV) threads the bilayer. The stretch at 184–268 (KDIIDNKLRE…KKATDDFKKK (85 aa)) forms a coiled coil. Over residues 258-275 (AKKATDDFKKKKQADKNK) the composition is skewed to basic and acidic residues. Residues 258–325 (AKKATDDFKK…QFQTRDSKGQ (68 aa)) form a disordered region. Positions 278–312 (ASKPSPGPKPAPKPSPGPKPAPKPSPGPKPSPGPS) are enriched in pro residues. Positions 407–649 (GGGGGGGNVS…KNVKISKWSP (243 aa)) are catalytic.

Requires Ca(2+) as cofactor. The cofactor is Mg(2+).

The protein localises to the membrane. The protein resides in the virion. Its activity is regulated as follows. Inhibited by Mn(2+), Cu(2+), Co(2+), Fe(2+), Zn(2+), Ni(2+), EDTA and EGTA. In terms of biological role, during viral entry, involved in the degradation of the host cell wall at the site of attachment. The protein is Exolysin of Chlorella (PBCV-1).